A 61-amino-acid chain; its full sequence is N-acetyl-D-glucosamine kinase (61 aa).

A Phosphotyrosine modification is found at Y30. S45 contacts ATP.

It belongs to the eukaryotic-type N-acetylglucosamine kinase family. As to quaternary structure, homodimer.

It catalyses the reaction N-acetyl-D-glucosamine + ATP = N-acetyl-D-glucosamine 6-phosphate + ADP + H(+). The catalysed reaction is aldehydo-N-acetyl-D-mannosamine + ATP = aldehydo-N-acetyl-D-mannosamine 6-phosphate + ADP + H(+). It carries out the reaction N-acetyl-D-muramoyl-L-alanyl-D-isoglutamine + ATP = 6-O-phospho-N-acetyl-D-muramoyl-L-alanyl-D-isoglutamine + ADP + H(+). It functions in the pathway amino-sugar metabolism; N-acetylneuraminate degradation. Converts endogenous N-acetylglucosamine (GlcNAc), a major component of complex carbohydrates, from lysosomal degradation or nutritional sources into GlcNAc 6-phosphate. Also has N-acetylmannosamine (ManNAc) kinase activity. Involved in the N-glycolylneuraminic acid (Neu5Gc) degradation pathway. Also involved in innate immunity by promoting detection of bacterial peptidoglycan by NOD2: acts by catalyzing phosphorylation of muramyl dipeptide (MDP), a fragment of bacterial peptidoglycan, to generate 6-O-phospho-muramyl dipeptide, which acts as a direct ligand for NOD2. This chain is N-acetyl-D-glucosamine kinase, found in Mesocricetus auratus (Golden hamster).